We begin with the raw amino-acid sequence, 152 residues long: MEIFKKKNRVIAYTDGACKGNPGIGGWGAILSYNGVDKEIYGSEKDTTNNRMELMAAIKTLQALKRKCDITIYTDSKYLQNGINEWLANWKANGWKTAAKKEVKNKDLWQELDSLTNKHNVTWGWVKGHSGNAGNEKADELANKAIAELIGK.

The 142-residue stretch at 6–147 folds into the RNase H type-1 domain; that stretch reads KKNRVIAYTD…ADELANKAIA (142 aa). Mg(2+) contacts are provided by Asp15, Glu53, Asp75, and Asp139.

The protein belongs to the RNase H family. Monomer. Mg(2+) serves as cofactor.

The protein localises to the cytoplasm. The enzyme catalyses Endonucleolytic cleavage to 5'-phosphomonoester.. Endonuclease that specifically degrades the RNA of RNA-DNA hybrids. This chain is Ribonuclease H, found in Francisella tularensis subsp. tularensis (strain FSC 198).